The primary structure comprises 97 residues: Putative membrane protein insertion efficiency factor (97 aa).

It belongs to the UPF0161 family.

The protein localises to the cell membrane. In terms of biological role, could be involved in insertion of integral membrane proteins into the membrane. The polypeptide is Putative membrane protein insertion efficiency factor (Lactobacillus johnsonii (strain CNCM I-12250 / La1 / NCC 533)).